The primary structure comprises 78 residues: Toxin OAIP 5 (78 aa).

The signal sequence occupies residues 1 to 19 (MLIVILTCALLVIYHAAAA). Residues 20–40 (EELEAKDVIESKALATLDEER) constitute a propeptide that is removed on maturation. 3 disulfides stabilise this stretch: C43-C56, C47-C70, and C64-C75.

Belongs to the neurotoxin 12 (Hwtx-2) family. 05 (OAIP-5) subfamily. In terms of tissue distribution, expressed by the venom gland.

Its subcellular location is the secreted. In terms of biological role, probable ion channel inhibitor. Shows insecticidal activity when injected into mealworms. The polypeptide is Toxin OAIP 5 (Selenotypus plumipes (Australian featherleg tarantula)).